The chain runs to 448 residues: Methionine aminopeptidase 2 (448 aa).

The segment at 1 to 94 is disordered; it reads MAAQVTDALK…PRVLLSNLFP (94 aa). The span at 37–50 shows a compositional bias: acidic residues; it reads AEAEDSDDDDEEPV. A compositionally biased stretch (basic residues) spans 61 to 74; the sequence is KKKRKRKKKPKKKA. Residue histidine 201 participates in substrate binding. A divalent metal cation contacts are provided by aspartate 221, aspartate 232, and histidine 301. Histidine 309 is a substrate binding site. 2 residues coordinate a divalent metal cation: glutamate 334 and glutamate 429.

The protein belongs to the peptidase M24A family. Methionine aminopeptidase eukaryotic type 2 subfamily. Co(2+) is required as a cofactor. It depends on Zn(2+) as a cofactor. The cofactor is Mn(2+). Requires Fe(2+) as cofactor.

It is found in the cytoplasm. It catalyses the reaction Release of N-terminal amino acids, preferentially methionine, from peptides and arylamides.. In terms of biological role, cotranslationally removes the N-terminal methionine from nascent proteins. The N-terminal methionine is often cleaved when the second residue in the primary sequence is small and uncharged (Met-Ala-, Cys, Gly, Pro, Ser, Thr, or Val). The chain is Methionine aminopeptidase 2 from Botryotinia fuckeliana (strain B05.10) (Noble rot fungus).